Consider the following 625-residue polypeptide: 1-deoxy-D-xylulose-5-phosphate synthase (625 aa).

Thiamine diphosphate contacts are provided by residues His-74 and 115–117 (GHS). Position 146 (Asp-146) interacts with Mg(2+). Residues 147–148 (GA), Asn-175, Tyr-286, and Glu-367 contribute to the thiamine diphosphate site. Asn-175 is a binding site for Mg(2+).

The protein belongs to the transketolase family. DXPS subfamily. In terms of assembly, homodimer. It depends on Mg(2+) as a cofactor. Thiamine diphosphate serves as cofactor.

The enzyme catalyses D-glyceraldehyde 3-phosphate + pyruvate + H(+) = 1-deoxy-D-xylulose 5-phosphate + CO2. The protein operates within metabolic intermediate biosynthesis; 1-deoxy-D-xylulose 5-phosphate biosynthesis; 1-deoxy-D-xylulose 5-phosphate from D-glyceraldehyde 3-phosphate and pyruvate: step 1/1. In terms of biological role, catalyzes the acyloin condensation reaction between C atoms 2 and 3 of pyruvate and glyceraldehyde 3-phosphate to yield 1-deoxy-D-xylulose-5-phosphate (DXP). This is 1-deoxy-D-xylulose-5-phosphate synthase from Lachnoclostridium phytofermentans (strain ATCC 700394 / DSM 18823 / ISDg) (Clostridium phytofermentans).